A 347-amino-acid polypeptide reads, in one-letter code: Trace amine-associated receptor 4 (347 aa).

At methionine 1–tyrosine 37 the chain is on the extracellular side. Asparagine 20 carries N-linked (GlcNAc...) asparagine glycosylation. Intrachain disulfides connect cysteine 23–cysteine 187 and cysteine 106–cysteine 191. Residues leucine 38–isoleucine 58 form a helical membrane-spanning segment. At alanine 59–asparagine 69 the chain is on the cytoplasmic side. The chain crosses the membrane as a helical span at residues phenylalanine 70–serine 90. Over methionine 91–serine 110 the chain is Extracellular. Residues cysteine 111 to valine 129 traverse the membrane as a helical segment. Topologically, residues aspartate 130–valine 149 are cytoplasmic. Residues valine 150–phenylalanine 170 traverse the membrane as a helical segment. At serine 171–lysine 197 the chain is on the extracellular side. Residues leucine 175–threonine 188 are extracellular Loop 2 (ECL2). A helical membrane pass occupies residues leucine 198–isoleucine 218. Topologically, residues tyrosine 219–lysine 260 are cytoplasmic. The helical transmembrane segment at threonine 261 to isoleucine 281 threads the bilayer. The Extracellular portion of the chain corresponds to threonine 282–asparagine 296. Residues valine 297–tyrosine 317 form a helical membrane-spanning segment. The Cytoplasmic portion of the chain corresponds to proline 318–proline 347.

The protein belongs to the G-protein coupled receptor 1 family.

It localises to the cell membrane. Its function is as follows. Olfactory receptor specific for 2-phenylethylamine, a trace amine present at high concentration in the urine of carnivore species, playing a key role in fear and avoidance responses. 2-phenylethylamine acts as a kairomone in the chemical detection of carnivore odor and triggers fear in rats. This receptor is probably mediated by the G(s)-class of G-proteins which activate adenylate cyclase. This Rattus norvegicus (Rat) protein is Trace amine-associated receptor 4.